We begin with the raw amino-acid sequence, 636 residues long: Fructose-1,6-bisphosphatase class 3 (636 aa).

The protein belongs to the FBPase class 3 family. It depends on Mn(2+) as a cofactor.

It carries out the reaction beta-D-fructose 1,6-bisphosphate + H2O = beta-D-fructose 6-phosphate + phosphate. It functions in the pathway carbohydrate biosynthesis; gluconeogenesis. This Streptococcus gordonii (strain Challis / ATCC 35105 / BCRC 15272 / CH1 / DL1 / V288) protein is Fructose-1,6-bisphosphatase class 3.